The sequence spans 1181 residues: HEAT repeat-containing protein 6 (1181 aa).

The HEAT 1 repeat unit spans residues 159-198 (LELLGETGLLMKLSDLAQSDPEVRRAAVHCMANLCLSVPG). Disordered regions lie at residues 294 to 347 (DGRT…PVTG) and 371 to 407 (LDGS…AEGG). The segment covering 300 to 312 (KPQQSESSASRPT) has biased composition (polar residues). The span at 313 to 325 (LNKKKKSKVKPKK) shows a compositional bias: basic residues. Residues Ser336, Ser337, Ser399, and Ser402 each carry the phosphoserine modification. The span at 383–399 (SSPFSSSSWKRVSSSES) shows a compositional bias: low complexity. HEAT repeat units lie at residues 452–490 (ELGS…GSKQ), 514–552 (SSIR…DAPY), and 558–595 (SLLT…THAP). Residues 613–648 (NSNSATPHLSPPDWWKKAPAGPSLEETSVSSPKGSS) form a disordered region. Residue Thr618 is modified to Phosphothreonine. A compositionally biased stretch (polar residues) spans 637-646 (EETSVSSPKG). Ser643 bears the Phosphoserine mark.

In Pongo abelii (Sumatran orangutan), this protein is HEAT repeat-containing protein 6 (HEATR6).